The following is a 197-amino-acid chain: Holliday junction branch migration complex subunit RuvA (197 aa).

Residues 1-64 form a domain I region; sequence MIDSIVGTIQ…LSELECYGFL (64 aa). The interval 65-143 is domain II; sequence TREERELFLK…KEFKVASTSG (79 aa). The tract at residues 144–152 is flexible linker; sequence TEEKTYEKL. The tract at residues 152–197 is domain III; the sequence is LEEISLALLSLGYEIDEINQVLSSEDFSELSLEDGIKLALKKLSKI.

This sequence belongs to the RuvA family. Homotetramer. Forms an RuvA(8)-RuvB(12)-Holliday junction (HJ) complex. HJ DNA is sandwiched between 2 RuvA tetramers; dsDNA enters through RuvA and exits via RuvB. An RuvB hexamer assembles on each DNA strand where it exits the tetramer. Each RuvB hexamer is contacted by two RuvA subunits (via domain III) on 2 adjacent RuvB subunits; this complex drives branch migration. In the full resolvosome a probable DNA-RuvA(4)-RuvB(12)-RuvC(2) complex forms which resolves the HJ.

The protein localises to the cytoplasm. In terms of biological role, the RuvA-RuvB-RuvC complex processes Holliday junction (HJ) DNA during genetic recombination and DNA repair, while the RuvA-RuvB complex plays an important role in the rescue of blocked DNA replication forks via replication fork reversal (RFR). RuvA specifically binds to HJ cruciform DNA, conferring on it an open structure. The RuvB hexamer acts as an ATP-dependent pump, pulling dsDNA into and through the RuvAB complex. HJ branch migration allows RuvC to scan DNA until it finds its consensus sequence, where it cleaves and resolves the cruciform DNA. This chain is Holliday junction branch migration complex subunit RuvA, found in Caldicellulosiruptor saccharolyticus (strain ATCC 43494 / DSM 8903 / Tp8T 6331).